The following is a 119-amino-acid chain: MTRVKRGIIARKRRQKILNMNKGFRGAASVLFRTANQRYMKSLRSAYENRHNKKRNFRKLWISRLNSAVRLNGLNYSQFVYMLKKSGIILNRKILSQLSICDPQIFHELYSYIASKNLI.

Belongs to the bacterial ribosomal protein bL20 family.

Its subcellular location is the plastid. It localises to the chloroplast. Functionally, binds directly to 23S ribosomal RNA and is necessary for the in vitro assembly process of the 50S ribosomal subunit. It is not involved in the protein synthesizing functions of that subunit. In Oedogonium cardiacum (Filamentous green alga), this protein is Large ribosomal subunit protein bL20c.